We begin with the raw amino-acid sequence, 365 residues long: Sulfate/thiosulfate import ATP-binding protein CysA (365 aa).

Residues 3-237 (IEIARIKKSF…PATRFVLEFM (235 aa)) enclose the ABC transporter domain. 35 to 42 (GPSGSGKT) contributes to the ATP binding site.

It belongs to the ABC transporter superfamily. Sulfate/tungstate importer (TC 3.A.1.6) family. The complex is composed of two ATP-binding proteins (CysA), two transmembrane proteins (CysT and CysW) and a solute-binding protein (CysP).

The protein localises to the cell inner membrane. The enzyme catalyses sulfate(out) + ATP + H2O = sulfate(in) + ADP + phosphate + H(+). It catalyses the reaction thiosulfate(out) + ATP + H2O = thiosulfate(in) + ADP + phosphate + H(+). In terms of biological role, part of the ABC transporter complex CysAWTP involved in sulfate/thiosulfate import. Responsible for energy coupling to the transport system. This Salmonella typhimurium (strain LT2 / SGSC1412 / ATCC 700720) protein is Sulfate/thiosulfate import ATP-binding protein CysA.